The sequence spans 317 residues: MSWFDRLRQGLSKTRQQISGTAGPLDQEVQTAFTRIDNIEDLEYALIAADVGRAATEEIIEDIRKNGEGRLQDALMRALTLQLEPNARRAQFRELGFSPDVSRSKVDPKGHVVMVIGVNGVGKTTTIAKLGQYYMERGQSVMFAAGDTFRAAAGTQLGVWGERLGVPVIQGVDGGDPAAVAFDAAGARKARGTDLLFVDTAGRLHNKHNLMEELKKVRRVIDKADPGEPAEVWLVLDAVTGQNGLQQAKKFHEATPLTGVVVTKLDGTAKGGILVPIVRELGVPIKFIGVGEQPGDLQPFDSQEFVRALFDVELPKA.

GTP is bound by residues 117–124 (GVNGVGKT), 199–203 (DTAGR), and 263–266 (TKLD).

It belongs to the GTP-binding SRP family. FtsY subfamily. In terms of assembly, part of the signal recognition particle protein translocation system, which is composed of SRP and FtsY.

It is found in the cell membrane. The protein localises to the cytoplasm. It carries out the reaction GTP + H2O = GDP + phosphate + H(+). Its function is as follows. Involved in targeting and insertion of nascent membrane proteins into the cytoplasmic membrane. Acts as a receptor for the complex formed by the signal recognition particle (SRP) and the ribosome-nascent chain (RNC). The polypeptide is Signal recognition particle receptor FtsY (Deinococcus radiodurans (strain ATCC 13939 / DSM 20539 / JCM 16871 / CCUG 27074 / LMG 4051 / NBRC 15346 / NCIMB 9279 / VKM B-1422 / R1)).